A 280-amino-acid chain; its full sequence is Tritrans,polycis-undecaprenyl-diphosphate synthase (geranylgeranyl-diphosphate specific) (280 aa).

Residue aspartate 57 is part of the active site. Aspartate 57 lines the Mg(2+) pocket. Substrate contacts are provided by residues 58–61, arginine 70, histidine 74, and 102–104; these read GNRR and STE. The Proton acceptor role is filled by asparagine 105. Substrate contacts are provided by residues phenylalanine 106, arginine 108, arginine 229, and 235-237; that span reads RIS. Residue glutamate 248 coordinates Mg(2+).

It belongs to the UPP synthase family. In terms of assembly, homodimer. Requires Mg(2+) as cofactor.

The catalysed reaction is geranylgeranyl diphosphate + 7 isopentenyl diphosphate = tri-trans,hepta-cis-undecaprenyl diphosphate + 7 diphosphate. Catalyzes the sequential condensation of isopentenyl diphosphate (IPP) with geranylgeranyl diphosphate (GGPP) to yield (2Z,6Z,10Z,14Z,18Z,22Z,26Z,30E,34E,38E)-undecaprenyl diphosphate (tritrans,heptacis-UPP). It is probably the precursor of glycosyl carrier lipids. The sequence is that of Tritrans,polycis-undecaprenyl-diphosphate synthase (geranylgeranyl-diphosphate specific) from Methanocaldococcus jannaschii (strain ATCC 43067 / DSM 2661 / JAL-1 / JCM 10045 / NBRC 100440) (Methanococcus jannaschii).